We begin with the raw amino-acid sequence, 231 residues long: Biosynthetic peptidoglycan transglycosylase (231 aa).

The helical transmembrane segment at 7–27 (LLFWLIVVPVLLVLLLQLYFF) threads the bilayer.

This sequence belongs to the glycosyltransferase 51 family.

The protein resides in the cell inner membrane. It catalyses the reaction [GlcNAc-(1-&gt;4)-Mur2Ac(oyl-L-Ala-gamma-D-Glu-L-Lys-D-Ala-D-Ala)](n)-di-trans,octa-cis-undecaprenyl diphosphate + beta-D-GlcNAc-(1-&gt;4)-Mur2Ac(oyl-L-Ala-gamma-D-Glu-L-Lys-D-Ala-D-Ala)-di-trans,octa-cis-undecaprenyl diphosphate = [GlcNAc-(1-&gt;4)-Mur2Ac(oyl-L-Ala-gamma-D-Glu-L-Lys-D-Ala-D-Ala)](n+1)-di-trans,octa-cis-undecaprenyl diphosphate + di-trans,octa-cis-undecaprenyl diphosphate + H(+). It participates in cell wall biogenesis; peptidoglycan biosynthesis. Functionally, peptidoglycan polymerase that catalyzes glycan chain elongation from lipid-linked precursors. The protein is Biosynthetic peptidoglycan transglycosylase of Janthinobacterium sp. (strain Marseille) (Minibacterium massiliensis).